A 512-amino-acid chain; its full sequence is Gamma-aminobutyric acid receptor subunit beta-2 (512 aa).

Residues 1 to 25 form the signal peptide; it reads MWRVRKRGYFGIWSFPLIIAAVCAQ. Topologically, residues 26–241 are extracellular; that stretch reads SVNDPSNMSL…LSLSFKLKRN (216 aa). Residues N32 and N104 are each glycosylated (N-linked (GlcNAc...) asparagine). Histamine is bound at residue Y121. The cysteines at positions 160 and 174 are disulfide-linked. N173 is a glycosylation site (N-linked (GlcNAc...) asparagine). Residues 180-181 and T226 contribute to the histamine site; that span reads SY. Residues Y181 and T226 each contribute to the 4-aminobutanoate site. Residues 242-262 form a helical membrane-spanning segment; it reads IGYFILQTYMPSILITILSWV. At 263–272 the chain is on the cytoplasmic side; it reads SFWINYDASA. Residues 273–292 form a helical membrane-spanning segment; sequence ARVALGITTVLTMTTINTHL. The Extracellular segment spans residues 293-310; the sequence is RETLPKIPYVKAIDMYLM. Residues 311–331 form a helical membrane-spanning segment; that stretch reads GCFVFVFMALLEYALVNYIFF. Over 332–490 the chain is Cytoplasmic; that stretch reads GRGPQRQKKA…LTDVNAIDRW (159 aa). Y441 bears the Phosphotyrosine mark. The helical transmembrane segment at 491-511 threads the bilayer; that stretch reads SRIFFPVVFSFFNIVYWLYYV. Residue N512 is a topological domain, extracellular.

This sequence belongs to the ligand-gated ion channel (TC 1.A.9) family. Gamma-aminobutyric acid receptor (TC 1.A.9.5) subfamily. GABRB2 sub-subfamily. In terms of assembly, heteropentamer, formed by a combination of alpha (GABRA1-6), beta (GABRB1-3), gamma (GABRG1-3), delta (GABRD), epsilon (GABRE), rho (GABRR1-3), pi (GABRP) and theta (GABRQ) chains, each subunit exhibiting distinct physiological and pharmacological properties. Interacts with UBQLN1. May interact with KIF21B. Identified in a complex of 720 kDa composed of LHFPL4, NLGN2, GABRA1, GABRB2, GABRG2 and GABRB3. As to expression, isoform 1 and isoform 2 show reduced expression in schizophrenic brain. Isoform 3 shows increased expression in schizophrenic and bipolar disorder brains while isoform 4 shows reduced expression.

The protein resides in the postsynaptic cell membrane. It is found in the cell membrane. The protein localises to the cytoplasmic vesicle membrane. It catalyses the reaction chloride(in) = chloride(out). Its activity is regulated as follows. Allosterically activated by benzodiazepines. Allosterically activated by the anesthetic etomidate. Inhibited by the antagonist bicuculline. Potentiated by histamine. Beta subunit of the heteropentameric ligand-gated chloride channel gated by gamma-aminobutyric acid (GABA), a major inhibitory neurotransmitter in the brain. GABA-gated chloride channels, also named GABA(A) receptors (GABAAR), consist of five subunits arranged around a central pore and contain GABA active binding site(s) located at the alpha and beta subunit interface(s). When activated by GABA, GABAARs selectively allow the flow of chloride anions across the cell membrane down their electrochemical gradient. Chloride influx into the postsynaptic neuron following GABAAR opening decreases the neuron ability to generate a new action potential, thereby reducing nerve transmission. GABAARs containing alpha-1 and beta-2 or -3 subunits exhibit synaptogenic activity; the gamma-2 subunit being necessary but not sufficient to induce rapid synaptic contacts formation. Extrasynaptic beta-2 receptors contribute to the tonic GABAergic inhibition. Beta-containing GABAARs can simultaneously bind GABA and histamine where histamine binds at the interface of two neighboring beta subunits, which may be involved in the regulation of sleep and wakefulness. In Homo sapiens (Human), this protein is Gamma-aminobutyric acid receptor subunit beta-2.